Reading from the N-terminus, the 418-residue chain is Tyrosine--tRNA ligase (418 aa).

Y34 provides a ligand contact to L-tyrosine. Residues 39–48 (PTADSLHLGH) carry the 'HIGH' region motif. The L-tyrosine site is built by Y169 and Q173. Residues 229–233 (KFGKS) carry the 'KMSKS' region motif. ATP is bound at residue K232. The region spanning 352 to 418 (NNIVELLVSS…GKKKYFVLTY (67 aa)) is the S4 RNA-binding domain.

The protein belongs to the class-I aminoacyl-tRNA synthetase family. TyrS type 1 subfamily. Homodimer.

The protein resides in the cytoplasm. The catalysed reaction is tRNA(Tyr) + L-tyrosine + ATP = L-tyrosyl-tRNA(Tyr) + AMP + diphosphate + H(+). Functionally, catalyzes the attachment of tyrosine to tRNA(Tyr) in a two-step reaction: tyrosine is first activated by ATP to form Tyr-AMP and then transferred to the acceptor end of tRNA(Tyr). The sequence is that of Tyrosine--tRNA ligase from Streptococcus pneumoniae serotype 19F (strain G54).